The following is a 362-amino-acid chain: S-adenosylmethionine:tRNA ribosyltransferase-isomerase (362 aa).

The protein belongs to the QueA family. As to quaternary structure, monomer.

The protein localises to the cytoplasm. The catalysed reaction is 7-aminomethyl-7-carbaguanosine(34) in tRNA + S-adenosyl-L-methionine = epoxyqueuosine(34) in tRNA + adenine + L-methionine + 2 H(+). Its pathway is tRNA modification; tRNA-queuosine biosynthesis. Its function is as follows. Transfers and isomerizes the ribose moiety from AdoMet to the 7-aminomethyl group of 7-deazaguanine (preQ1-tRNA) to give epoxyqueuosine (oQ-tRNA). This chain is S-adenosylmethionine:tRNA ribosyltransferase-isomerase, found in Syntrophus aciditrophicus (strain SB).